Reading from the N-terminus, the 647-residue chain is DNA mismatch repair protein MutL (647 aa).

The tract at residues 393–423 is disordered; the sequence is VSLVANKQQPTVKQAKRSADDSDSEHGKLDY. Residues 409-423 are compositionally biased toward basic and acidic residues; that stretch reads RSADDSDSEHGKLDY.

It belongs to the DNA mismatch repair MutL/HexB family.

Functionally, this protein is involved in the repair of mismatches in DNA. It is required for dam-dependent methyl-directed DNA mismatch repair. May act as a 'molecular matchmaker', a protein that promotes the formation of a stable complex between two or more DNA-binding proteins in an ATP-dependent manner without itself being part of a final effector complex. The polypeptide is DNA mismatch repair protein MutL (Streptococcus thermophilus (strain CNRZ 1066)).